The primary structure comprises 339 residues: 7,8-didemethyl-8-hydroxy-5-deazariboflavin synthase (339 aa).

The 232-residue stretch at 25–256 (ATYSPAYTIV…PDITIQIPPN (232 aa)) folds into the Radical SAM core domain. [4Fe-4S] cluster is bound by residues C39, C43, and C46.

It belongs to the radical SAM superfamily. CofG family. In terms of assembly, consists of two subunits, CofG and CofH. [4Fe-4S] cluster is required as a cofactor.

It carries out the reaction 5-amino-5-(4-hydroxybenzyl)-6-(D-ribitylimino)-5,6-dihydrouracil + S-adenosyl-L-methionine = 7,8-didemethyl-8-hydroxy-5-deazariboflavin + 5'-deoxyadenosine + L-methionine + NH4(+) + H(+). The protein operates within cofactor biosynthesis; coenzyme F0 biosynthesis. Functionally, catalyzes the radical-mediated synthesis of 7,8-didemethyl-8-hydroxy-5-deazariboflavin from 5-amino-5-(4-hydroxybenzyl)-6-(D-ribitylimino)-5,6-dihydrouracil. The chain is 7,8-didemethyl-8-hydroxy-5-deazariboflavin synthase from Nostoc sp. (strain PCC 7120 / SAG 25.82 / UTEX 2576).